The sequence spans 21 residues: Nigrocin-2GRb (21 aa).

Expressed by the skin glands.

It is found in the secreted. Its function is as follows. Antimicrobial peptide active against the Gram-positive bacterium S.aureus (MIC=12.5 uM) and against the Gram-negative bacteria E.coli (MIC=3 uM). Has antifungal activity against C.albicans (MIC=50 uM). Has some hemolytic activity against human erythrocytes (LC(50)=40 uM). The sequence is that of Nigrocin-2GRb from Odorrana grahami (Yunnanfu frog).